A 92-amino-acid chain; its full sequence is Co-chaperonin GroES (92 aa).

The protein belongs to the GroES chaperonin family. Heptamer of 7 subunits arranged in a ring. Interacts with the chaperonin GroEL.

Its subcellular location is the cytoplasm. In terms of biological role, together with the chaperonin GroEL, plays an essential role in assisting protein folding. The GroEL-GroES system forms a nano-cage that allows encapsulation of the non-native substrate proteins and provides a physical environment optimized to promote and accelerate protein folding. GroES binds to the apical surface of the GroEL ring, thereby capping the opening of the GroEL channel. This chain is Co-chaperonin GroES, found in Thermotoga petrophila (strain ATCC BAA-488 / DSM 13995 / JCM 10881 / RKU-1).